Consider the following 562-residue polypeptide: Oxygen-dependent choline dehydrogenase (562 aa).

An FAD-binding site is contributed by 4 to 33 (DYIIIGAGSAGNVLATRLTEDPNTTVLLLE). His473 serves as the catalytic Proton acceptor.

This sequence belongs to the GMC oxidoreductase family. FAD is required as a cofactor.

It carries out the reaction choline + A = betaine aldehyde + AH2. The enzyme catalyses betaine aldehyde + NAD(+) + H2O = glycine betaine + NADH + 2 H(+). The protein operates within amine and polyamine biosynthesis; betaine biosynthesis via choline pathway; betaine aldehyde from choline (cytochrome c reductase route): step 1/1. Functionally, involved in the biosynthesis of the osmoprotectant glycine betaine. Catalyzes the oxidation of choline to betaine aldehyde and betaine aldehyde to glycine betaine at the same rate. The polypeptide is Oxygen-dependent choline dehydrogenase (Escherichia coli (strain SMS-3-5 / SECEC)).